The chain runs to 317 residues: Homoserine O-succinyltransferase (317 aa).

The Acyl-thioester intermediate role is filled by Cys-142. The substrate site is built by Lys-163 and Ser-192. The Proton acceptor role is filled by His-235. Glu-237 is an active-site residue. Arg-249 is a substrate binding site.

The protein belongs to the MetA family.

The protein resides in the cytoplasm. It carries out the reaction L-homoserine + succinyl-CoA = O-succinyl-L-homoserine + CoA. Its pathway is amino-acid biosynthesis; L-methionine biosynthesis via de novo pathway; O-succinyl-L-homoserine from L-homoserine: step 1/1. Functionally, transfers a succinyl group from succinyl-CoA to L-homoserine, forming succinyl-L-homoserine. The sequence is that of Homoserine O-succinyltransferase from Aeromonas hydrophila subsp. hydrophila (strain ATCC 7966 / DSM 30187 / BCRC 13018 / CCUG 14551 / JCM 1027 / KCTC 2358 / NCIMB 9240 / NCTC 8049).